Here is a 352-residue protein sequence, read N- to C-terminus: MDKRATILLKTLIERYIAEGQPVGSRTLSKYSGLDLSPATIRNVMSDLEEMGFIASPHTSAGRVPTPRGYRLFVDTMLTAGPLDILGMHDRMAQQIAGTIAEQVRAQLASHGSESSQRVIAAAAQTLSNLSQFAGIVMTPRRTHAFRQIEFLRLSETRILLIVVTPEGDVQNRIIHTDTPYTPSQLVEAANYINAHYGGMTFDAVRERLRGELNALQADMTSLMQAAVEAGSSAVSDEDPVVISGERKLLEVEDLSSSMDKLRRLFAVFEQKTGLLQLLDVSSRAEGVQIFIGGESSLVPHEDMAVITAPYEVDGKIVGTLGVIGPMRMAYERVIPIVDITAKLLSSTLSQH.

Belongs to the HrcA family.

Functionally, negative regulator of class I heat shock genes (grpE-dnaK-dnaJ and groELS operons). Prevents heat-shock induction of these operons. In Ralstonia nicotianae (strain ATCC BAA-1114 / GMI1000) (Ralstonia solanacearum), this protein is Heat-inducible transcription repressor HrcA.